A 728-amino-acid chain; its full sequence is FAD-dependent monooxygenase avaB (728 aa).

A helical transmembrane segment spans residues 17 to 37 (VIDLLLTFFFYSGLYGLIAAK). Residues 50 to 64 (NQQCENTDDVPQSFQ) show a composition bias toward polar residues. The disordered stretch occupies residues 50–72 (NQQCENTDDVPQSFQRPRDTRST). Val-168 is a binding site for FAD. An NADP(+)-binding site is contributed by 490–491 (DL).

Belongs to the FAD-binding monooxygenase family. Requires FAD as cofactor.

It localises to the membrane. It functions in the pathway secondary metabolite metabolism. Multifunctional FAD-dependent monooxygenase; part of the cluster that mediates the biosynthesis of a highly modified cyclo-arginine-tryptophan dipeptide (cRW). Within the pathway, avaB uses the avaA cyclo-arginine-tryptophan dipeptide (cRW) as substrate to generate the cyclo-Arg-formylkynurenine diketopiperazine (DKP). AvaB also catalyzes an additional N-oxidation of the avaC product which is followed by cyclization and dehydration. The first step of the pathway is perfornmed by the arginine-containing cyclodipeptide synthase (RCPDS) avaA that acts as the scaffold-generating enzyme and is responsible for formation of the cyclo-Arg-Trp (cRW) diketopiperazine. AvaB then acts as a multifunctional flavoenzyme that is responsible for generating the cyclo-Arg-formylkynurenine DKP, which can be deformylated by avaC. AvaB then further catalyzes an additional N-oxidation followed by cyclization and dehydration. The next step is an N-acetylation of the guanidine group catalyzed by the arginine N-acetyltransferase avaD. The roles of the additional enzymes identified within the ava cluster still have to be determined. The chain is FAD-dependent monooxygenase avaB from Aspergillus versicolor.